A 38-amino-acid polypeptide reads, in one-letter code: MIEPLLLGIVLGLIPITLAGLFVAAYLQYKRGNQLNID.

Residues 5-25 form a helical membrane-spanning segment; that stretch reads LLLGIVLGLIPITLAGLFVAA.

It belongs to the PetG family. In terms of assembly, the 4 large subunits of the cytochrome b6-f complex are cytochrome b6, subunit IV (17 kDa polypeptide, PetD), cytochrome f and the Rieske protein, while the 4 small subunits are PetG, PetL, PetM and PetN. The complex functions as a dimer.

The protein resides in the cellular thylakoid membrane. Functionally, component of the cytochrome b6-f complex, which mediates electron transfer between photosystem II (PSII) and photosystem I (PSI), cyclic electron flow around PSI, and state transitions. PetG is required for either the stability or assembly of the cytochrome b6-f complex. This Rippkaea orientalis (strain PCC 8801 / RF-1) (Cyanothece sp. (strain PCC 8801)) protein is Cytochrome b6-f complex subunit 5.